The chain runs to 398 residues: Cobalamin import ATP-binding protein BtuD (398 aa).

Residues 3–237 (LDVTGLDVEL…DTIRAAFDAR (235 aa)) enclose the ABC transporter domain. 35–42 (GPNGAGKS) contacts ATP.

Belongs to the ABC transporter superfamily. The complex is composed of two ATP-binding proteins (BtuD), two transmembrane proteins (BtuC) and a solute-binding protein (BtuF).

The protein resides in the cell membrane. The enzyme catalyses an R-cob(III)alamin(out) + ATP + H2O = an R-cob(III)alamin(in) + ADP + phosphate + H(+). Functionally, required for corrinoid utilization. Probably part of the ABC transporter complex BtuCDF involved in cobalamin (vitamin B12) import. Probably responsible for energy coupling to the transport system. The sequence is that of Cobalamin import ATP-binding protein BtuD (btuD) from Halobacterium salinarum (strain ATCC 29341 / DSM 671 / R1).